The primary structure comprises 179 residues: Large ribosomal subunit protein uL5 (179 aa).

It belongs to the universal ribosomal protein uL5 family. In terms of assembly, part of the 50S ribosomal subunit; part of the 5S rRNA/L5/L18/L25 subcomplex. Contacts the 5S rRNA and the P site tRNA. Forms a bridge to the 30S subunit in the 70S ribosome.

Its function is as follows. This is one of the proteins that bind and probably mediate the attachment of the 5S RNA into the large ribosomal subunit, where it forms part of the central protuberance. In the 70S ribosome it contacts protein S13 of the 30S subunit (bridge B1b), connecting the 2 subunits; this bridge is implicated in subunit movement. Contacts the P site tRNA; the 5S rRNA and some of its associated proteins might help stabilize positioning of ribosome-bound tRNAs. The polypeptide is Large ribosomal subunit protein uL5 (Xylella fastidiosa (strain 9a5c)).